The following is an 845-amino-acid chain: Putative DEAD-box ATP-dependent RNA helicase 29 (845 aa).

The Q motif signature appears at 28–56; sequence GGFESLNLGPNVFNAIKKKGYKVPTPIQR. Positions 59 to 232 constitute a Helicase ATP-binding domain; the sequence is MPLILSGVDV…KAGLREPQLV (174 aa). Residue 72-79 coordinates ATP; that stretch reads ARTGSGKT. The DEAD box signature appears at 180 to 183; that stretch reads DEAD. The region spanning 256-411 is the Helicase C-terminal domain; that stretch reads KYSALLYLVR…EVLKNMEEVM (156 aa). Positions 675-845 are disordered; sequence SGKIKTESGA…GGGGKRGRGR (171 aa). Basic and acidic residues-rich tracts occupy residues 696–716 and 738–754; these read RWQE…DETT and VRSE…ERQQ. Residues 770 to 799 show a composition bias toward gly residues; the sequence is GGRGGARGGRGGGARGGRGGSRDFGGGGRD. Basic and acidic residues predominate over residues 806–817; sequence RGGRSGGRDFGG. Residues 828–845 are compositionally biased toward basic residues; that stretch reads GGKRGGGRGGGGKRGRGR.

The protein belongs to the DEAD box helicase family. DDX54/DBP10 subfamily.

The catalysed reaction is ATP + H2O = ADP + phosphate + H(+). The chain is Putative DEAD-box ATP-dependent RNA helicase 29 (RH29) from Arabidopsis thaliana (Mouse-ear cress).